A 238-amino-acid chain; its full sequence is Riboflavin-binding protein (238 aa).

A signal peptide spans 1 to 17 (MLRFAVTLFAVITSSTC). Intrachain disulfides connect Cys-22/Cys-49, Cys-41/Cys-90, Cys-50/Cys-94, Cys-74/Cys-155, Cys-81/Cys-127, Cys-116/Cys-186, Cys-120/Cys-169, Cys-133/Cys-151, and Cys-184/Cys-219. Residues Asn-53, Asn-67, and Asn-105 are each glycosylated (N-linked (GlcNAc...) asparagine). N-linked (GlcNAc...) asparagine glycosylation occurs at Asn-164. Ser-204, Ser-205, Ser-208, Ser-209, Ser-210, Ser-212, Ser-213, and Ser-214 each carry phosphoserine.

Belongs to the folate receptor family. Post-translationally, N-glycosylated. As to expression, expressed in egg yolk and egg white (at protein level).

In terms of biological role, required for the transport of riboflavin to the developing oocyte. The protein is Riboflavin-binding protein of Dromaius novaehollandiae (Emu).